Consider the following 557-residue polypeptide: Protein NRT1/ PTR FAMILY 5.14 (557 aa).

The next 2 membrane-spanning stretches (helical) occupy residues 35-55 (AALF…GIGS) and 78-98 (AWSG…DAFL). Threonine 103 carries the post-translational modification Phosphothreonine. A run of 10 helical transmembrane segments spans residues 104 to 124 (IIIS…SAFL), 133 to 153 (SSTS…VAIG), 183 to 203 (FFNW…LVVV), 209 to 229 (FSWA…LVLF), 320 to 340 (IPVW…MTFF), 357 to 377 (IPPA…VPIY), 401 to 421 (IGTG…VEFK), 443 to 463 (IWWL…TLVG), 479 to 499 (IGLA…SLLI), and 526 to 546 (YFYW…LFIS).

It belongs to the major facilitator superfamily. Proton-dependent oligopeptide transporter (POT/PTR) (TC 2.A.17) family. As to expression, expressed in roots.

The protein resides in the membrane. In Arabidopsis thaliana (Mouse-ear cress), this protein is Protein NRT1/ PTR FAMILY 5.14 (NPF5.14).